The following is a 522-amino-acid chain: Peptide chain release factor 3 (522 aa).

The 268-residue stretch at 9–276 (KKRRTFAIIS…SFVNLAPAPQ (268 aa)) folds into the tr-type G domain. GTP contacts are provided by residues 18-25 (SHPDAGKT), 86-90 (DTPGH), and 140-143 (NKLD).

Belongs to the TRAFAC class translation factor GTPase superfamily. Classic translation factor GTPase family. PrfC subfamily.

The protein localises to the cytoplasm. Functionally, increases the formation of ribosomal termination complexes and stimulates activities of RF-1 and RF-2. It binds guanine nucleotides and has strong preference for UGA stop codons. It may interact directly with the ribosome. The stimulation of RF-1 and RF-2 is significantly reduced by GTP and GDP, but not by GMP. This Lactobacillus gasseri (strain ATCC 33323 / DSM 20243 / BCRC 14619 / CIP 102991 / JCM 1131 / KCTC 3163 / NCIMB 11718 / NCTC 13722 / AM63) protein is Peptide chain release factor 3.